We begin with the raw amino-acid sequence, 331 residues long: MEIIKISPRGYCYGVIDAMVIAKNASLDPNLPRPIHILGMIVHNKHVTDAFESIGIYTVDGANREEILDKITTGTVIFTAHGVSPSVKAKAVAKGLTTIDATCPDVLHTYNLILEKQAAGYEIIYIGKKGHPEPEGAYGTAPDVVHLVETKADIDALSLLSDKIFVTNQTTMSKWDVADLMHYIKGKFPKAIQHQEICMATQVRQEAVALQAKDADLTIVVGDPRSNNTARLAQVSIEKAGTKAYRIADITELDIEWIKDAKKVAVTAGASTPTQLVREVLLFLEQFDAADKTTWKREHNQDFERILPKTKNKYMAEKRSQRLAHLKNGGS.

Cys-12 is a [4Fe-4S] cluster binding site. His-43 and His-81 together coordinate (2E)-4-hydroxy-3-methylbut-2-enyl diphosphate. Dimethylallyl diphosphate-binding residues include His-43 and His-81. The isopentenyl diphosphate site is built by His-43 and His-81. Cys-103 is a binding site for [4Fe-4S] cluster. His-131 is a (2E)-4-hydroxy-3-methylbut-2-enyl diphosphate binding site. His-131 serves as a coordination point for dimethylallyl diphosphate. His-131 lines the isopentenyl diphosphate pocket. Residue Glu-133 is the Proton donor of the active site. Thr-170 serves as a coordination point for (2E)-4-hydroxy-3-methylbut-2-enyl diphosphate. Cys-198 contacts [4Fe-4S] cluster. (2E)-4-hydroxy-3-methylbut-2-enyl diphosphate is bound by residues Ser-226, Asn-228, and Ser-271. Positions 226, 228, and 271 each coordinate dimethylallyl diphosphate. Residues Ser-226, Asn-228, and Ser-271 each contribute to the isopentenyl diphosphate site.

Belongs to the IspH family. [4Fe-4S] cluster serves as cofactor.

It catalyses the reaction isopentenyl diphosphate + 2 oxidized [2Fe-2S]-[ferredoxin] + H2O = (2E)-4-hydroxy-3-methylbut-2-enyl diphosphate + 2 reduced [2Fe-2S]-[ferredoxin] + 2 H(+). The enzyme catalyses dimethylallyl diphosphate + 2 oxidized [2Fe-2S]-[ferredoxin] + H2O = (2E)-4-hydroxy-3-methylbut-2-enyl diphosphate + 2 reduced [2Fe-2S]-[ferredoxin] + 2 H(+). Its pathway is isoprenoid biosynthesis; dimethylallyl diphosphate biosynthesis; dimethylallyl diphosphate from (2E)-4-hydroxy-3-methylbutenyl diphosphate: step 1/1. It functions in the pathway isoprenoid biosynthesis; isopentenyl diphosphate biosynthesis via DXP pathway; isopentenyl diphosphate from 1-deoxy-D-xylulose 5-phosphate: step 6/6. Functionally, catalyzes the conversion of 1-hydroxy-2-methyl-2-(E)-butenyl 4-diphosphate (HMBPP) into a mixture of isopentenyl diphosphate (IPP) and dimethylallyl diphosphate (DMAPP). Acts in the terminal step of the DOXP/MEP pathway for isoprenoid precursor biosynthesis. The polypeptide is 4-hydroxy-3-methylbut-2-enyl diphosphate reductase (Listeria monocytogenes serovar 1/2a (strain ATCC BAA-679 / EGD-e)).